Consider the following 64-residue polypeptide: Large ribosomal subunit protein bL35 (64 aa).

Residues 19-41 (SGKVKRERMNGSHNLEHKNRKRT) form a disordered region. Positions 25-35 (ERMNGSHNLEH) are enriched in basic and acidic residues.

This sequence belongs to the bacterial ribosomal protein bL35 family.

The protein is Large ribosomal subunit protein bL35 of Chlorobaculum tepidum (strain ATCC 49652 / DSM 12025 / NBRC 103806 / TLS) (Chlorobium tepidum).